Here is a 271-residue protein sequence, read N- to C-terminus: Probable ribosomal RNA small subunit methyltransferase A (271 aa).

S-adenosyl-L-methionine is bound by residues Asn-22, Leu-24, Gly-49, Glu-70, Asp-97, and Asn-112.

This sequence belongs to the class I-like SAM-binding methyltransferase superfamily. rRNA adenine N(6)-methyltransferase family. RsmA subfamily.

Its subcellular location is the cytoplasm. Functionally, specifically dimethylates two adjacent adenosines in the loop of a conserved hairpin near the 3'-end of 16S rRNA in the 30S particle. May play a critical role in biogenesis of 30S subunits. This Methanosphaera stadtmanae (strain ATCC 43021 / DSM 3091 / JCM 11832 / MCB-3) protein is Probable ribosomal RNA small subunit methyltransferase A.